A 102-amino-acid chain; its full sequence is Protein transport protein sec61 subunit beta (102 aa).

A compositionally biased stretch (polar residues) spans 1–15 (MSSTKASGSVKNSAA). A disordered region spans residues 1–53 (MSSTKASGSVKNSAASAPGGPKSQIRRRAAVEKNTKESNSGPAGARAAGAPGS). Over 1 to 72 (MSSTKASGSV…DEASGFKVDP (72 aa)) the chain is Cytoplasmic. The span at 41–52 (GPAGARAAGAPG) shows a compositional bias: low complexity. Residues 73–93 (VVVMVLSVGFIASVFLLHIVA) traverse the membrane as a helical segment.

This sequence belongs to the SEC61-beta family. As to quaternary structure, heterotrimeric complex composed of SEC61, SBH1 and SSS1.

The protein resides in the endoplasmic reticulum membrane. Its function is as follows. Necessary for protein translocation in the endoplasmic reticulum. This Schizosaccharomyces pombe (strain 972 / ATCC 24843) (Fission yeast) protein is Protein transport protein sec61 subunit beta (sbh1).